The chain runs to 284 residues: MDAIKKKMQAMKIEKDNALDRADAAEEKVRQMTDKLERIEEELRDTQKKMMQTENDLDKAQEDLSTANSNLEEKEKKVQEAEAEVAALNRRMTLLEEELERAEERLKLATAKLEEATHTADESERVRKVMENRSFQDEERANTVESQLKEAQMLAEEADRKYDEVARKLTMVEADLERAEERAETGENKIVELEEELRVVGNNLKSLEVSEEKALQREDSYEEQIRTVSARLKEAETRAEFAERSVQKLQKEVDRLEDELVHEKERYKSISEELDQTFQELSGY.

The stretch at 1–284 forms a coiled coil; the sequence is MDAIKKKMQA…DQTFQELSGY (284 aa). The span at 110 to 142 shows a compositional bias: basic and acidic residues; the sequence is TAKLEEATHTADESERVRKVMENRSFQDEERAN. A disordered region spans residues 110 to 143; it reads TAKLEEATHTADESERVRKVMENRSFQDEERANT.

Belongs to the tropomyosin family.

Tropomyosin, in association with the troponin complex, plays a central role in the calcium dependent regulation of muscle contraction. The chain is Tropomyosin from Anisakis simplex (Herring worm).